Here is a 432-residue protein sequence, read N- to C-terminus: Adenylosuccinate synthetase (432 aa).

GTP-binding positions include 13-19 and 41-43; these read GDEGKGK and GHT. The active-site Proton acceptor is the Asp-14. 2 residues coordinate Mg(2+): Asp-14 and Gly-41. IMP contacts are provided by residues 14-17, 39-42, Thr-130, Arg-144, Gln-225, Thr-240, and Arg-304; these read DEGK and NAGH. His-42 (proton donor) is an active-site residue. Residue 300–306 participates in substrate binding; it reads ATTGRRR. GTP-binding positions include Arg-306, 332 to 334, and 415 to 417; these read KLD and STG.

The protein belongs to the adenylosuccinate synthetase family. As to quaternary structure, homodimer. Requires Mg(2+) as cofactor.

It is found in the cytoplasm. The catalysed reaction is IMP + L-aspartate + GTP = N(6)-(1,2-dicarboxyethyl)-AMP + GDP + phosphate + 2 H(+). It functions in the pathway purine metabolism; AMP biosynthesis via de novo pathway; AMP from IMP: step 1/2. In terms of biological role, plays an important role in the de novo pathway of purine nucleotide biosynthesis. Catalyzes the first committed step in the biosynthesis of AMP from IMP. The chain is Adenylosuccinate synthetase from Shigella sonnei (strain Ss046).